Here is a 460-residue protein sequence, read N- to C-terminus: Pentatricopeptide repeat-containing protein At5g43790 (460 aa).

PPR repeat units follow at residues Ser70 to Phe107, Asn111 to Phe142, Asp149 to Pro179, Asp180 to Pro214, Asn215 to Leu249, Asn250 to Arg280, Asp281 to Pro315, Asp316 to Pro351, and Lys352 to Lys382. The segment at Leu387 to Asn460 is type E motif; degenerate.

It belongs to the PPR family. PCMP-E subfamily.

The sequence is that of Pentatricopeptide repeat-containing protein At5g43790 (PCMP-E30) from Arabidopsis thaliana (Mouse-ear cress).